Consider the following 405-residue polypeptide: MSDSIKRVVLAYSGGLDTSVILKWLQVTYGCEVVTFTADLGQGEELEPARAKAELMGIKPEHIYIDDLREEFVRDFVFPMMRANARYEGDYLLGTSIARPLISKRLVEIARETGADAVAHGATGKGNDQVRFELSAYALNPDIKVIAPWREWDLTSRTALIAWAEQHQIPVPKDKRGESPFSTDANLLHTSSEGKVLEDPWEETPDYVYSRTVNPEDAPDTPEYITIDFERGDGVALNGQAMSPATLLAALNDLGRKHGIGRLDLVENRFVGMKSRGMYETPGGEIYARAHRGIESITLDRGAAHLKDELMPKYAELIYNGFWFAPEREMLQAAIDHSQANVTGTVRLKLYKGNASVVGRKSPFSLYSERHVTFEDDAGAYDQKDAAGFIRLNALRLKLLARQGR.

ATP is bound by residues 11 to 19 and Ala-38; that span reads AYSGGLDTS. Residues Tyr-91 and Ser-96 each contribute to the L-citrulline site. Gly-121 serves as a coordination point for ATP. L-aspartate-binding residues include Thr-123, Asn-127, and Asp-128. L-citrulline is bound at residue Asn-127. Arg-131, Ser-182, Ser-191, Glu-267, and Tyr-279 together coordinate L-citrulline.

It belongs to the argininosuccinate synthase family. Type 1 subfamily. Homotetramer.

The protein localises to the cytoplasm. The catalysed reaction is L-citrulline + L-aspartate + ATP = 2-(N(omega)-L-arginino)succinate + AMP + diphosphate + H(+). The protein operates within amino-acid biosynthesis; L-arginine biosynthesis; L-arginine from L-ornithine and carbamoyl phosphate: step 2/3. This is Argininosuccinate synthase from Sphingopyxis alaskensis (strain DSM 13593 / LMG 18877 / RB2256) (Sphingomonas alaskensis).